We begin with the raw amino-acid sequence, 440 residues long: Phenylacetate-coenzyme A ligase (440 aa).

It belongs to the phenylacetyl-CoA ligase family. In terms of assembly, monomer.

It catalyses the reaction 2-phenylacetate + ATP + CoA = phenylacetyl-CoA + AMP + diphosphate. It functions in the pathway aromatic compound metabolism; phenylacetate degradation. Inhibition of activity is observed in the presence of a 1 mM of the divalent cations zinc, copper, and nickel. Functionally, catalyzes the activation of phenylacetic acid (PA) to phenylacetyl-CoA (PA-CoA). Involved in the phenylalanine metabolism. The chain is Phenylacetate-coenzyme A ligase (paaK) from Aromatoleum evansii (Azoarcus evansii).